The sequence spans 285 residues: 4-hydroxybenzoate octaprenyltransferase (285 aa).

8 helical membrane-spanning segments follow: residues 28 to 48, 86 to 106, 110 to 130, 133 to 153, 160 to 180, 207 to 227, 232 to 252, and 262 to 284; these read LWAL…CIFF, IAAW…FALI, NSLT…YPFF, FFAI…PMAF, VPLV…AYDT, VAAI…AGVM, WPYW…YTLI, and AAFR…AYAI.

It belongs to the UbiA prenyltransferase family. It depends on Mg(2+) as a cofactor.

Its subcellular location is the cell inner membrane. The enzyme catalyses all-trans-octaprenyl diphosphate + 4-hydroxybenzoate = 4-hydroxy-3-(all-trans-octaprenyl)benzoate + diphosphate. Its pathway is cofactor biosynthesis; ubiquinone biosynthesis. Its function is as follows. Catalyzes the prenylation of para-hydroxybenzoate (PHB) with an all-trans polyprenyl group. Mediates the second step in the final reaction sequence of ubiquinone-8 (UQ-8) biosynthesis, which is the condensation of the polyisoprenoid side chain with PHB, generating the first membrane-bound Q intermediate 3-octaprenyl-4-hydroxybenzoate. The protein is 4-hydroxybenzoate octaprenyltransferase of Cupriavidus pinatubonensis (strain JMP 134 / LMG 1197) (Cupriavidus necator (strain JMP 134)).